The following is a 145-amino-acid chain: MSQKAIKGYINLIIPATGATPAPPIGPALGQRKVNIAAFCKDFNDATQGMEKGIPLPTVITVYEDSSFSFKIKTPPASYFLKKYAKITKGSSATKKEAVVGKVTMDDCCEIAKLKMPDLNTKNIEAATKIICGSAASMGLEVVGN.

The protein belongs to the universal ribosomal protein uL11 family. Part of the ribosomal stalk of the 50S ribosomal subunit. Interacts with L10 and the large rRNA to form the base of the stalk. L10 forms an elongated spine to which L12 dimers bind in a sequential fashion forming a multimeric L10(L12)X complex. Post-translationally, one or more lysine residues are methylated.

Forms part of the ribosomal stalk which helps the ribosome interact with GTP-bound translation factors. The chain is Large ribosomal subunit protein uL11 from Rickettsia massiliae (strain Mtu5).